The chain runs to 977 residues: uncharacterized protein (977 aa).

The segment covering 1-24 (MMQQRSGSLSLLSNAVQAGQSSDP) has biased composition (polar residues). The interval 1-65 (MMQQRSGSLS…HEKTKAGKDR (65 aa)) is disordered. A DNA-binding region (zn(2)-C6 fungal-type) is located at residues 72–99 (CQSCRKKKVKCSGERPSCDQCLKHNIPC). The interval 176–195 (LSHPTIVPSSNSSSLLNSTN) is disordered. Residues 177–195 (SHPTIVPSSNSSSLLNSTN) are compositionally biased toward low complexity. Serine 220 carries the phosphoserine modification. 3 disordered regions span residues 287–307 (TDSLSIVSNPSQTPAKFDSNR), 357–380 (NSASSGLSTSYTNNNDTTSDNNSL), and 751–774 (HTPINVTNGESQNNSNNDPSANGA). Low complexity predominate over residues 364–379 (STSYTNNNDTTSDNNS). Positions 751-770 (HTPINVTNGESQNNSNNDPS) are enriched in polar residues.

The protein resides in the cytoplasm. Its subcellular location is the nucleus. This is an uncharacterized protein from Schizosaccharomyces pombe (strain 972 / ATCC 24843) (Fission yeast).